A 205-amino-acid polypeptide reads, in one-letter code: Large ribosomal subunit protein uL4 (205 aa).

Belongs to the universal ribosomal protein uL4 family. As to quaternary structure, part of the 50S ribosomal subunit. Contacts proteins L15 and L34.

Functionally, one of the primary rRNA binding proteins, this protein initially binds near the 5'-end of the 23S rRNA. It is important during the early stages of 50S assembly. In terms of biological role, makes multiple contacts with different domains of the 23S rRNA in the assembled 50S subunit. This protein is located close to the polypeptide exit tunnel, and interacts with the modified macrolide azithromycin, which blocks the tunnel. The polypeptide is Large ribosomal subunit protein uL4 (rplD) (Deinococcus radiodurans (strain ATCC 13939 / DSM 20539 / JCM 16871 / CCUG 27074 / LMG 4051 / NBRC 15346 / NCIMB 9279 / VKM B-1422 / R1)).